Reading from the N-terminus, the 321-residue chain is Large ribosomal subunit protein uL3 (321 aa).

The protein belongs to the universal ribosomal protein uL3 family. As to quaternary structure, part of the 50S ribosomal subunit. Forms a cluster with proteins L14 and L24e.

In terms of biological role, one of the primary rRNA binding proteins, it binds directly near the 3'-end of the 23S rRNA, where it nucleates assembly of the 50S subunit. The chain is Large ribosomal subunit protein uL3 from Nanoarchaeum equitans (strain Kin4-M).